Here is a 134-residue protein sequence, read N- to C-terminus: uncharacterized protein (134 aa).

The signal sequence occupies residues 1-16 (MAKAVALLLAAIAASA).

This is an uncharacterized protein from Oryza sativa subsp. indica (Rice).